A 153-amino-acid polypeptide reads, in one-letter code: Bifunctional protein GAL10 (153 aa).

The interval 1–153 (MSDDIFLVTG…IPIPEHCPME (153 aa)) is galactowaldenase.

It in the N-terminal section; belongs to the NAD(P)-dependent epimerase/dehydratase family. This sequence in the C-terminal section; belongs to the aldose epimerase family. NAD(+) is required as a cofactor.

It carries out the reaction UDP-alpha-D-glucose = UDP-alpha-D-galactose. The catalysed reaction is alpha-D-glucose = beta-D-glucose. It functions in the pathway carbohydrate metabolism; galactose metabolism. The protein operates within carbohydrate metabolism; hexose metabolism. Its function is as follows. Mutarotase converts alpha-aldose to the beta-anomer. It is active on D-glucose, L-arabinose, D-xylose, D-galactose, maltose and lactose. The chain is Bifunctional protein GAL10 (GAL10) from Candida maltosa (Yeast).